Consider the following 87-residue polypeptide: HssA/B-like protein 31 (87 aa).

This sequence belongs to the hssA/B family.

In Dictyostelium discoideum (Social amoeba), this protein is HssA/B-like protein 31 (hssl31).